The primary structure comprises 214 residues: Thiamine-phosphate synthase (214 aa).

4-amino-2-methyl-5-(diphosphooxymethyl)pyrimidine contacts are provided by residues Gln37–Lys41 and Asn69. Positions 70 and 89 each coordinate Mg(2+). Ser108 contacts 4-amino-2-methyl-5-(diphosphooxymethyl)pyrimidine. A 2-[(2R,5Z)-2-carboxy-4-methylthiazol-5(2H)-ylidene]ethyl phosphate-binding site is contributed by Thr134–Ser136. Lys137 lines the 4-amino-2-methyl-5-(diphosphooxymethyl)pyrimidine pocket. Residues Gly167 and Ile187–Ser188 each bind 2-[(2R,5Z)-2-carboxy-4-methylthiazol-5(2H)-ylidene]ethyl phosphate.

It belongs to the thiamine-phosphate synthase family. Requires Mg(2+) as cofactor.

The enzyme catalyses 2-[(2R,5Z)-2-carboxy-4-methylthiazol-5(2H)-ylidene]ethyl phosphate + 4-amino-2-methyl-5-(diphosphooxymethyl)pyrimidine + 2 H(+) = thiamine phosphate + CO2 + diphosphate. It catalyses the reaction 2-(2-carboxy-4-methylthiazol-5-yl)ethyl phosphate + 4-amino-2-methyl-5-(diphosphooxymethyl)pyrimidine + 2 H(+) = thiamine phosphate + CO2 + diphosphate. It carries out the reaction 4-methyl-5-(2-phosphooxyethyl)-thiazole + 4-amino-2-methyl-5-(diphosphooxymethyl)pyrimidine + H(+) = thiamine phosphate + diphosphate. It functions in the pathway cofactor biosynthesis; thiamine diphosphate biosynthesis; thiamine phosphate from 4-amino-2-methyl-5-diphosphomethylpyrimidine and 4-methyl-5-(2-phosphoethyl)-thiazole: step 1/1. Functionally, condenses 4-methyl-5-(beta-hydroxyethyl)thiazole monophosphate (THZ-P) and 2-methyl-4-amino-5-hydroxymethyl pyrimidine pyrophosphate (HMP-PP) to form thiamine monophosphate (TMP). In Natronomonas pharaonis (strain ATCC 35678 / DSM 2160 / CIP 103997 / JCM 8858 / NBRC 14720 / NCIMB 2260 / Gabara) (Halobacterium pharaonis), this protein is Thiamine-phosphate synthase.